We begin with the raw amino-acid sequence, 714 residues long: Kinesin-like protein KIN-13 (714 aa).

Positions 1–63 (MSDLVYQWLE…FRLITTLKSR (63 aa)) constitute an SAM domain. Residues 69-81 (QQPSAPNTGATPQ) are compositionally biased toward polar residues. Disordered regions lie at residues 69–109 (QQPS…NDIQ) and 122–161 (GGYE…NPRG). Residues 82–92 (SVPSSHVSPHV) show a composition bias toward low complexity. Residues 151–160 (PNAPNPPNPR) are compositionally biased toward pro residues. The Kinesin motor domain occupies 183 to 515 (RIRVVIRKRP…LRYADRVKEL (333 aa)). 273-280 (GQTGSGKS) lines the ATP pocket.

The protein belongs to the TRAFAC class myosin-kinesin ATPase superfamily. Kinesin family. KIN-13 subfamily. As to quaternary structure, interacts with PLK. Post-translationally, phosphorylated by PLK.

Its subcellular location is the cytoplasm. The protein localises to the cytoskeleton. It localises to the cell projection. The protein resides in the cilium. It is found in the flagellum. Its subcellular location is the flagellum basal body. The protein localises to the flagellum axoneme. It localises to the spindle. The protein resides in the chromosome. It is found in the centromere. Its subcellular location is the kinetochore. Functionally, involved in cell cycle. Involved in formation of flagella, regulation of flagellar length, and formation of median bodies during interphase. Regulates flagellar length in all eight distal flagellar tips by promoting disassembly of the microtubules. Disassembles microtubules at the distal flagellar tips in a length-dependent manner in order to maintain different equilibrium lengths of the four flagellar pairs. Regulates interphase and mitotic microtubule dynamics. Regulates microtubule disassembly dynamics of the dual mitotic spindles and the median body. The chain is Kinesin-like protein KIN-13 from Giardia intestinalis (strain ATCC 50803 / WB clone C6) (Giardia lamblia).